The sequence spans 1289 residues: Ethylene-insensitive protein 2.1 (1289 aa).

5 helical membrane passes run 18–38 (LLPAVGPGLLIAIGYVDPGKW), 48–68 (FGFDLVLPMLLFNFVAILCQY), 96–116 (FLGVQAALSVIALDLTMILGI), 128–148 (LSTCVSLAAAEAILFPFFATL), and 155–175 (SFLCTCIAGFILLLYFFGVLI). N-linked (GlcNAc...) asparagine glycosylation is present at N185. Residues 199-219 (LMSLLGASIMPHNFFLHSAIV) traverse the membrane as a helical segment. N-linked (GlcNAc...) asparagine glycosylation is present at N227. The next 7 helical transmembrane spans lie at 235 to 255 (LNHFFAILCIFSGIYLVNFVL), 260 to 280 (ANVFHSTGLVLLTFPDAMSLM), 288 to 308 (VAPFGFSLILFFANQITAFSW), 335 to 355 (IIAVVPALYCVWTSGVEGIYQ), 356 to 376 (LLILTQVMVALLLPSSVIPLF), 393 to 413 (FLEFVALISFMGMLGIKIIFV), and 439 to 459 (YIVLLITACSSFCLMLWLAAT). N521 carries an N-linked (GlcNAc...) asparagine glycan. The tract at residues 611 to 659 (LHTEKEDDEGDNWEPEDSSKGVPGSTLSLTSDGPGSFRSLSGKSDAGGN) is disordered. Residues 616-626 (EDDEGDNWEPE) are compositionally biased toward acidic residues. Over residues 635–652 (STLSLTSDGPGSFRSLSG) the composition is skewed to polar residues. Residues S646 and S663 each carry the phosphoserine modification. N745 carries N-linked (GlcNAc...) asparagine glycosylation. The disordered stretch occupies residues 792–816 (SIADSSERRYSGVRTPPSSDGWDNQ). The span at 807 to 816 (PPSSDGWDNQ) shows a compositional bias: polar residues. The residue at position 819 (T819) is a Phosphothreonine. S923 carries the post-translational modification Phosphoserine. Residue N1025 is glycosylated (N-linked (GlcNAc...) asparagine). The disordered stretch occupies residues 1208–1227 (HRSSPPASNGMLPPASKPGR). A Nuclear localization signal motif is present at residues 1274 to 1281 (LKRYKRRL).

This sequence belongs to the NRAMP (TC 2.A.55) family.

It is found in the endoplasmic reticulum membrane. The protein localises to the nucleus. It localises to the cytoplasm. Its function is as follows. Central factor in signaling pathways regulated by ethylene (ET) and involved in various processes including development, plant defense, senescence, nucleotide sugar flux, and tropisms. In terms of biological role, trafficking signal inducing ethylene response. The nuclear localization is both necessary and sufficient to activate EIN3-mediated transcription and ethylene responses. This chain is Ethylene-insensitive protein 2.1, found in Populus trichocarpa (Western balsam poplar).